The primary structure comprises 579 residues: Chromosomal replication initiator protein DnaA (579 aa).

The interval 1–71 is domain I, interacts with DnaA modulators; it reads MQDFWQAAAA…TALACEYWET (71 aa). Positions 71–242 are domain II; that stretch reads TQVSVHFVLD…QQSDTVHERS (172 aa). Disordered regions lie at residues 131 to 196 and 212 to 240; these read AGAQ…SAAH and EASARSYRVPSPQPAAPAGAQQQSDTVHE. Residues 171–183 show a composition bias toward low complexity; that stretch reads SQSQQSAQGRGAA. The interval 243–459 is domain III, AAA+ region; it reads RLNPILTFDN…GALRKILAFS (217 aa). The ATP site is built by glycine 287, glycine 289, lysine 290, and threonine 291. The segment at 460–579 is domain IV, binds dsDNA; that stretch reads NFHGKDITID…LHVLEQTLKG (120 aa).

The protein belongs to the DnaA family. In terms of assembly, oligomerizes as a right-handed, spiral filament on DNA at oriC.

It localises to the cytoplasm. Its function is as follows. Plays an essential role in the initiation and regulation of chromosomal replication. ATP-DnaA binds to the origin of replication (oriC) to initiate formation of the DNA replication initiation complex once per cell cycle. Binds the DnaA box (a 9 base pair repeat at the origin) and separates the double-stranded (ds)DNA. Forms a right-handed helical filament on oriC DNA; dsDNA binds to the exterior of the filament while single-stranded (ss)DNA is stabiized in the filament's interior. The ATP-DnaA-oriC complex binds and stabilizes one strand of the AT-rich DNA unwinding element (DUE), permitting loading of DNA polymerase. After initiation quickly degrades to an ADP-DnaA complex that is not apt for DNA replication. Binds acidic phospholipids. In Cupriavidus metallidurans (strain ATCC 43123 / DSM 2839 / NBRC 102507 / CH34) (Ralstonia metallidurans), this protein is Chromosomal replication initiator protein DnaA.